The primary structure comprises 103 residues: uncharacterized protein (103 aa).

Polar residues-rich tracts occupy residues 1-10 (MSNSCSTSSY) and 18-28 (TRSGSNVNRNY). The tract at residues 1-28 (MSNSCSTSSYPIRRKTPTRSGSNVNRNY) is disordered.

This is an uncharacterized protein from Acanthamoeba polyphaga mimivirus (APMV).